A 1285-amino-acid polypeptide reads, in one-letter code: Ataxin-2 (1285 aa).

Disordered regions lie at residues 1–85 (MRSS…PGSR), 111–178 (ARAC…SPGA), and 197–224 (PVAS…GLPQ). Over residues 29 to 38 (SLPRTARRGG) the composition is skewed to basic residues. Residues 48–65 (AGPPPRGPGAPPRGPRSP) are compositionally biased toward pro residues. A compositionally biased stretch (low complexity) spans 128–144 (SSSARPAPGCPRPACEP). Residues 205–214 (AGGGRPGLGR) are compositionally biased toward gly residues. S218 and S219 each carry phosphoserine. In terms of domain architecture, Sm spans 237-314 (RMVHILTSVV…FVVVQFKDTD (78 aa)). Residues S362 and S435 each carry the phosphoserine modification. Composition is skewed to basic and acidic residues over residues 428–440 (ALEN…EEKY) and 447–461 (CSDR…RDNK). Disordered stretches follow at residues 428-925 (ALEN…HQQP) and 1111-1191 (AALH…QSSF). S477 bears the Phosphoserine mark. The span at 498–510 (ASHTSDFNPNAGS) shows a compositional bias: polar residues. Position 523 is a phosphoserine (S523). A compositionally biased stretch (low complexity) spans 526-552 (PSHSSRPPSRYQSGPNSLPPRAATHTR). The segment covering 554 to 567 (PSRPPSRPSRPPSH) has biased composition (pro residues). S593 carries the post-translational modification Phosphoserine. A compositionally biased stretch (basic residues) spans 596-606 (AQRHPRNHRVS). R609 carries the asymmetric dimethylarginine; alternate modification. R609 is subject to Omega-N-methylarginine; alternate. Phosphoserine occurs at positions 611 and 653. Residues 662–672 (PRQSSIGNSPS) show a composition bias toward polar residues. Low complexity predominate over residues 685–694 (PAEAVSMPVP). A Phosphoserine modification is found at S697. A Phosphothreonine modification is found at T710. Positions 737-746 (ASETSPSFSK) are enriched in polar residues. Phosphoserine is present on residues S741 and S753. Positions 757 to 773 (SEHRKQIDDLKKFKNDF) are enriched in basic and acidic residues. Positions 776–789 (QPSSTSESMDQLLS) are enriched in polar residues. Over residues 790-813 (KNREGEKSRDLIKDKTEASAKDSF) the composition is skewed to basic and acidic residues. The span at 814 to 838 (IDSSSSSSNCTSGSSKTNSPSISPS) shows a compositional bias: low complexity. A phosphoserine mark is found at S827, S828, S832, S836, S838, S859, and S860. Polar residues predominate over residues 851 to 862 (VTSQGVQTSSPA). Residue K864 forms a Glycyl lysine isopeptide (Lys-Gly) (interchain with G-Cter in SUMO2) linkage. The span at 864 to 881 (KQEKDDREEKKDTTEQVR) shows a compositional bias: basic and acidic residues. Composition is skewed to low complexity over residues 896–907 (SFSQPKPSTTPT) and 1128–1165 (GQQQ…QQSA).

The protein belongs to the ataxin-2 family. As to quaternary structure, interacts with RBFOX1. Monomer. Can also form homodimers. Interacts with polyribosomes. Interacts with EGFR. Interacts with SH3GL3. Interacts with SH3GL2, SH3KBP1 and CBL. Interacts with ATXN2L. Expressed in the heart, lung, liver, kidney, skeletal muscle, spleen and intestine. Predominant expression was seen in the brain where a high level expression was found in the pyramidal cortical neurons, large brain stem neurons and cerebellar Purkinje cells. All three isoforms were found in all the tissues except skeletal muscle where only isoform 1 was found.

The protein localises to the cytoplasm. Its function is as follows. Involved in EGFR trafficking, acting as negative regulator of endocytic EGFR internalization at the plasma membrane. In Mus musculus (Mouse), this protein is Ataxin-2 (Atxn2).